The following is an 863-amino-acid chain: Glycogen phosphorylase (863 aa).

Residue Lys-618 is modified to N6-(pyridoxal phosphate)lysine.

The protein belongs to the glycogen phosphorylase family. Pyridoxal 5'-phosphate serves as cofactor.

The catalysed reaction is [(1-&gt;4)-alpha-D-glucosyl](n) + phosphate = [(1-&gt;4)-alpha-D-glucosyl](n-1) + alpha-D-glucose 1-phosphate. Functionally, phosphorylase is an important allosteric enzyme in carbohydrate metabolism. Enzymes from different sources differ in their regulatory mechanisms and in their natural substrates. However, all known phosphorylases share catalytic and structural properties. The sequence is that of Glycogen phosphorylase (glgP) from Mycobacterium tuberculosis (strain CDC 1551 / Oshkosh).